The chain runs to 335 residues: tRNA N6-adenosine threonylcarbamoyltransferase (335 aa).

Fe cation contacts are provided by His-111, His-115, and Tyr-132. Residues 132–136, Asp-164, Gly-177, Glu-181, and Asn-260 each bind substrate; that span reads YVSGG. Position 288 (Asp-288) interacts with Fe cation.

It belongs to the KAE1 / TsaD family. Monomer. Component of the KEOPS complex that consists of Kae1, Bud32, Cgi121 and Pcc1; the whole complex dimerizes. It depends on Fe(2+) as a cofactor.

Its subcellular location is the cytoplasm. It carries out the reaction L-threonylcarbamoyladenylate + adenosine(37) in tRNA = N(6)-L-threonylcarbamoyladenosine(37) in tRNA + AMP + H(+). In terms of biological role, required for the formation of a threonylcarbamoyl group on adenosine at position 37 (t(6)A37) in tRNAs that read codons beginning with adenine. Is a component of the KEOPS complex that is probably involved in the transfer of the threonylcarbamoyl moiety of threonylcarbamoyl-AMP (TC-AMP) to the N6 group of A37. Kae1 likely plays a direct catalytic role in this reaction, but requires other protein(s) of the complex to fulfill this activity. The protein is tRNA N6-adenosine threonylcarbamoyltransferase of Methanococcoides burtonii (strain DSM 6242 / NBRC 107633 / OCM 468 / ACE-M).